A 177-amino-acid polypeptide reads, in one-letter code: MSELTTIARPYAKAAFELAVEKGTIESWNEMLFFAGHVASNEKASALLAGMPTATTQAELFIQICAEQLNEQGQNLVKVMAENGRLIALPAVAQLFAKFKAEYDKEIDVDVISATPLVAAQQESLVAALEKRFARKVKLNCSEDAAVVGGLIIKAGDTVIDGSIRGKLNRLATTLQS.

This sequence belongs to the ATPase delta chain family. As to quaternary structure, F-type ATPases have 2 components, F(1) - the catalytic core - and F(0) - the membrane proton channel. F(1) has five subunits: alpha(3), beta(3), gamma(1), delta(1), epsilon(1). F(0) has three main subunits: a(1), b(2) and c(10-14). The alpha and beta chains form an alternating ring which encloses part of the gamma chain. F(1) is attached to F(0) by a central stalk formed by the gamma and epsilon chains, while a peripheral stalk is formed by the delta and b chains.

It localises to the cell inner membrane. In terms of biological role, f(1)F(0) ATP synthase produces ATP from ADP in the presence of a proton or sodium gradient. F-type ATPases consist of two structural domains, F(1) containing the extramembraneous catalytic core and F(0) containing the membrane proton channel, linked together by a central stalk and a peripheral stalk. During catalysis, ATP synthesis in the catalytic domain of F(1) is coupled via a rotary mechanism of the central stalk subunits to proton translocation. Its function is as follows. This protein is part of the stalk that links CF(0) to CF(1). It either transmits conformational changes from CF(0) to CF(1) or is implicated in proton conduction. This is ATP synthase subunit delta from Pseudoalteromonas translucida (strain TAC 125).